Here is a 192-residue protein sequence, read N- to C-terminus: Interleukin-18 (192 aa).

The propeptide occupies 1–35 (MAAIPVDDCINFVGMKFIDNTLYFVADSDENLETD).

It belongs to the IL-1 family. Forms a ternary complex with ligand-binding receptor subunit IL18R1 and signaling receptor subunit IL18RAP at the plasma membrane. Mature IL18 first binds to IL18R1 forming a low affinity binary complex, which then interacts with IL18RAP to form a high affinity ternary complex that signals inside the cell. Interacts with cargo receptor TMED10; the interaction mediates the translocation from the cytoplasm into the ERGIC (endoplasmic reticulum-Golgi intermediate compartment) and thereby secretion. The pro-IL-18 precursor is processed by CASP1, CASP4 or CASP5 to yield its mature, active form. The pro-IL-18 precursor features autoinhibitory interactions between the propeptide and the post-cleavage-site region, preventing recognition by the IL18R1 receptor. Processing by CASP1, CASP4 or CASP5 induces conformational changes to generate critical receptor-binding sites. The mature form is then secreted and released in the extracellular milieu by passing through the gasdermin-D (GSDMD) pore. In contrast, cleavage by CASP3 inactivates IL18.

The protein resides in the cytoplasm. It localises to the cytosol. The protein localises to the secreted. Pro-inflammatory cytokine primarily involved in epithelial barrier repair, polarized T-helper 1 (Th1) cell and natural killer (NK) cell immune responses. Upon binding to IL18R1 and IL18RAP, forms a signaling ternary complex which activates NF-kappa-B, triggering synthesis of inflammatory mediators. Synergizes with IL12/interleukin-12 to induce IFNG synthesis from T-helper 1 (Th1) cells and natural killer (NK) cells. Involved in transduction of inflammation downstream of pyroptosis: its mature form is specifically released in the extracellular milieu by passing through the gasdermin-D (GSDMD) pore. This is Interleukin-18 (IL18) from Felis catus (Cat).